The sequence spans 682 residues: Histone deacetylase 18 (682 aa).

Residues 59–382 form a histone deacetylase region; the sequence is KVGLVYDETM…SLACVQVLLE (324 aa). His191 (proton donor/acceptor) is an active-site residue. Zn(2+)-binding residues include Asp231, His233, and Asp324. Residues 430–608 are a coiled coil; it reads SAERNSADAL…DKELQEDRSR (179 aa).

It belongs to the histone deacetylase family. HD type 2 subfamily. The cofactor is Zn(2+). Expressed in roots, stems, young rosette leaves, flowers and siliques.

It is found in the nucleus. Its subcellular location is the cytoplasm. It catalyses the reaction N(6)-acetyl-L-lysyl-[histone] + H2O = L-lysyl-[histone] + acetate. In terms of biological role, responsible for the deacetylation of lysine residues on the N-terminal part of the core histones (H2A, H2B, H3 and H4). Histone deacetylation gives a tag for epigenetic repression and plays an important role in transcriptional regulation, cell cycle progression and developmental events. Histone deacetylases act via the formation of large multiprotein complexes. Required for appropriate cellular patterning in the root epidermis. Involved in the differentiation of hair and non-hair cells in the root epidermis. Is not directly involved in the regulation of the expression of pattern genes. Regulates the transcription of certain kinase genes, which are components of a positional information relay system, by changing their histone acetylation status. The polypeptide is Histone deacetylase 18 (Arabidopsis thaliana (Mouse-ear cress)).